The primary structure comprises 206 residues: Probable glutathione S-transferase 9 (206 aa).

A GST N-terminal domain is found at 2-79 (VSYKLIYFQS…YLSKQFGISG (78 aa)). Glutathione contacts are provided by residues Tyr-8, Trp-39, Lys-43, 49-51 (GQV), and 63-64 (QS). A GST C-terminal domain is found at 81 to 206 (SSWEEAQVDA…WIEKRPVTSR (126 aa)).

Belongs to the GST superfamily. Sigma family.

The enzyme catalyses RX + glutathione = an S-substituted glutathione + a halide anion + H(+). Its function is as follows. Conjugation of reduced glutathione to a wide number of exogenous and endogenous hydrophobic electrophiles. The polypeptide is Probable glutathione S-transferase 9 (gst-9) (Caenorhabditis elegans).